Consider the following 64-residue polypeptide: Large ribosomal subunit protein bL35 (64 aa).

A disordered region spans residues 1–25; that stretch reads MPKMKTHRGAAKRLKKTGTGKLKRA.

This sequence belongs to the bacterial ribosomal protein bL35 family.

The sequence is that of Large ribosomal subunit protein bL35 from Clostridioides difficile (strain 630) (Peptoclostridium difficile).